We begin with the raw amino-acid sequence, 274 residues long: tRNA (mnm(5)s(2)U34)-methyltransferase, chloroplastic (274 aa).

A chloroplast-targeting transit peptide spans methionine 1–cysteine 50. S-adenosyl-L-methionine is bound by residues asparagine 108, asparagine 110, aspartate 134, glutamine 136, and histidine 166.

The protein belongs to the methyltransferase superfamily. MnmM family.

The protein resides in the plastid. The protein localises to the chloroplast. The catalysed reaction is 5-aminomethyl-2-thiouridine(34) in tRNA + S-adenosyl-L-methionine = 5-methylaminomethyl-2-thiouridine(34) in tRNA + S-adenosyl-L-homocysteine + H(+). Its pathway is tRNA modification. Functionally, involved in the biosynthesis of 5-methylaminomethyl-2-thiouridine (mnm(5)s(2)U) at the wobble position (U34) in tRNA. Catalyzes the transfer of a methyl group from S-adenosyl-L-methionine to nm(5)s(2)U34 to form mnm(5)s(2)U34. The sequence is that of tRNA (mnm(5)s(2)U34)-methyltransferase, chloroplastic from Arabidopsis thaliana (Mouse-ear cress).